The primary structure comprises 349 residues: Leukotriene B4 receptor 1 (349 aa).

The Extracellular portion of the chain corresponds to 1–19 (MNTTSPAAPSSSGVSFISL). Residue Asn-2 is glycosylated (N-linked (GlcNAc...) asparagine). Residues 20 to 42 (LVIIVLSVALAVGLPGNSFVVWS) traverse the membrane as a helical segment. The Cytoplasmic portion of the chain corresponds to 43-54 (ILAKLRKRSVTA). Residues 55–75 (LMVLHLALADLAVLLTAPFFL) traverse the membrane as a helical segment. At 76 to 91 (YSVAQGTWTFGLSSCR) the chain is on the extracellular side. A helical transmembrane segment spans residues 92–113 (LFHYVCGVSMYASVLLIMTMSL). The Cytoplasmic segment spans residues 114 to 138 (DRSLAVALPFVSQKLRTKAVAWRVL). A helical membrane pass occupies residues 139–159 (AGIWVMSVLLATPVLLYRTVH). The Extracellular segment spans residues 160 to 179 (LGLNNRSLTCFLKYPSERHR). N-linked (GlcNAc...) asparagine glycosylation is present at Asn-164. Residues 180-200 (AFHLFFEVITGFLLPFLVVVA) form a helical membrane-spanning segment. At 201–222 (SYCDIGRRLRARRFRRSRRTGR) the chain is on the cytoplasmic side. The helical transmembrane segment at 223 to 243 (LVALIILAFAAFWLPYHVVNL) threads the bilayer. The Extracellular portion of the chain corresponds to 244 to 269 (AEGFRAAAGKALGSGPVGRRLLLARH). A helical membrane pass occupies residues 270-290 (VLITLAFLSSSVNPLLYACAG). Residues 291–349 (GGLLRSAGVGFIAKLLEGTGSETSSSRRKGTLAQTLRGTPASPEPDPAESLTASTNPLE) are Cytoplasmic-facing. Residues 311–349 (SETSSSRRKGTLAQTLRGTPASPEPDPAESLTASTNPLE) are disordered.

It belongs to the G-protein coupled receptor 1 family. Phosphorylated by GRK6 upon leukotriene B4 binding; which promotes desensitization.

It is found in the cell membrane. Receptor for extracellular ATP &gt; UTP and ADP. The activity of this receptor is mediated by G proteins which activate a phosphatidylinositol-calcium second messenger system. May be the cardiac P2Y receptor involved in the regulation of cardiac muscle contraction through modulation of L-type calcium currents. Is a receptor for leukotriene B4, a potent chemoattractant involved in inflammation and immune response. The polypeptide is Leukotriene B4 receptor 1 (LTB4R) (Bos taurus (Bovine)).